Consider the following 102-residue polypeptide: Large ribosomal subunit protein bL21 (102 aa).

The protein belongs to the bacterial ribosomal protein bL21 family. As to quaternary structure, part of the 50S ribosomal subunit. Contacts protein L20.

Functionally, this protein binds to 23S rRNA in the presence of protein L20. The polypeptide is Large ribosomal subunit protein bL21 (Cytophaga hutchinsonii (strain ATCC 33406 / DSM 1761 / CIP 103989 / NBRC 15051 / NCIMB 9469 / D465)).